Here is a 228-residue protein sequence, read N- to C-terminus: 7-cyano-7-deazaguanine synthase (228 aa).

Position 9-19 (9-19 (LSGGPDSTTVL)) interacts with ATP. Positions 193, 203, 206, and 209 each coordinate Zn(2+).

It belongs to the QueC family. The cofactor is Zn(2+).

It carries out the reaction 7-carboxy-7-deazaguanine + NH4(+) + ATP = 7-cyano-7-deazaguanine + ADP + phosphate + H2O + H(+). The protein operates within purine metabolism; 7-cyano-7-deazaguanine biosynthesis. Its function is as follows. Catalyzes the ATP-dependent conversion of 7-carboxy-7-deazaguanine (CDG) to 7-cyano-7-deazaguanine (preQ(0)). The polypeptide is 7-cyano-7-deazaguanine synthase (Rickettsia conorii (strain ATCC VR-613 / Malish 7)).